The following is a 69-amino-acid chain: U2-agatoxin-Ao1g (69 aa).

A signal peptide spans 1–20; the sequence is MKAIISLLLISAMVFSMIEA. A propeptide spanning residues 21–34 is cleaved from the precursor; that stretch reads VPVEEGLQLFEGER. Cystine bridges form between C36-C52, C43-C57, and C51-C67. Leucine amide is present on L68.

This sequence belongs to the neurotoxin 01 (U2-agtx) family. Expressed by the venom gland.

The protein resides in the secreted. Functionally, insect active toxin causing rapid but reversible paralysis in crickets. No activity shown in mammals. Does not show effect on mammalian voltage-gated calcium channels. In Agelena orientalis (Funnel-web spider), this protein is U2-agatoxin-Ao1g.